A 79-amino-acid polypeptide reads, in one-letter code: Short neurotoxin 7 (79 aa).

The N-terminal stretch at 1–21 is a signal peptide; it reads MKTLLLTLVMVTIMCLDLGYT. 4 disulfide bridges follow: C24/C41, C34/C59, C63/C71, and C72/C77.

Belongs to the three-finger toxin family. Short-chain subfamily. Type III alpha-neurotoxin sub-subfamily. As to expression, expressed by the venom gland.

It localises to the secreted. Its function is as follows. Binds with high affinity to muscle nicotinic acetylcholine receptor (nAChR) and hinders acetylcholine binding to the receptor, thereby impairing neuromuscular transmission. Competes with the binding of alpha-bungarotoxin on muscle AChR (from Torpedo) (IC(50)=0.30 uM). In vivo, causes muscle paralysis, spasms and increased respiration. The chain is Short neurotoxin 7 from Pseudonaja textilis (Eastern brown snake).